Consider the following 682-residue polypeptide: Potassium-transporting ATPase ATP-binding subunit (682 aa).

Transmembrane regions (helical) follow at residues proline 34–valine 54, isoleucine 58–phenylalanine 78, isoleucine 219–leucine 239, and valine 254–isoleucine 274. Aspartate 307 serves as the catalytic 4-aspartylphosphate intermediate. ATP contacts are provided by residues aspartate 344, glutamate 348, phenylalanine 377–serine 384, and lysine 395. Mg(2+) is bound by residues aspartate 518 and aspartate 522. 3 consecutive transmembrane segments (helical) span residues phenylalanine 588–methionine 608, alanine 616–leucine 636, and leucine 662–alanine 682.

Belongs to the cation transport ATPase (P-type) (TC 3.A.3) family. Type IA subfamily. In terms of assembly, the system is composed of three essential subunits: KdpA, KdpB and KdpC.

Its subcellular location is the cell inner membrane. It carries out the reaction K(+)(out) + ATP + H2O = K(+)(in) + ADP + phosphate + H(+). Functionally, part of the high-affinity ATP-driven potassium transport (or Kdp) system, which catalyzes the hydrolysis of ATP coupled with the electrogenic transport of potassium into the cytoplasm. This subunit is responsible for energy coupling to the transport system and for the release of the potassium ions to the cytoplasm. This Salmonella choleraesuis (strain SC-B67) protein is Potassium-transporting ATPase ATP-binding subunit.